The chain runs to 381 residues: Alkanesulfonate monooxygenase (381 aa).

It belongs to the SsuD family. Homotetramer.

The enzyme catalyses an alkanesulfonate + FMNH2 + O2 = an aldehyde + FMN + sulfite + H2O + 2 H(+). In terms of biological role, catalyzes the desulfonation of aliphatic sulfonates. This is Alkanesulfonate monooxygenase from Escherichia fergusonii (strain ATCC 35469 / DSM 13698 / CCUG 18766 / IAM 14443 / JCM 21226 / LMG 7866 / NBRC 102419 / NCTC 12128 / CDC 0568-73).